The primary structure comprises 65 residues: Large ribosomal subunit protein bL35 (65 aa).

Belongs to the bacterial ribosomal protein bL35 family.

This Stenotrophomonas maltophilia (strain R551-3) protein is Large ribosomal subunit protein bL35.